Consider the following 873-residue polypeptide: Serine/threonine-protein phosphatase 6 regulatory subunit 3 (873 aa).

5 disordered regions span residues 628–659, 693–715, 729–755, 767–787, and 840–873; these read IAFT…GTKQ, AHGT…MPAK, LSST…PLSA, PGSV…NADK, and AEEA…NGPV. Residues 644-655 are compositionally biased toward acidic residues; it reads DSEESTDSEEED. The segment covering 729-739 has biased composition (low complexity); sequence LSSTDSLRSNS.

This sequence belongs to the SAPS family. As to quaternary structure, protein phosphatase 6 (PP6) holoenzyme is proposed to be a heterotrimeric complex formed by the catalytic subunit, a SAPS domain-containing subunit (PP6R) and an ankyrin repeat-domain containing regulatory subunit (ARS).

In terms of biological role, regulatory subunit of protein phosphatase 6 (PP6). May function as a scaffolding PP6 subunit. This chain is Serine/threonine-protein phosphatase 6 regulatory subunit 3 (PPP6R3), found in Gallus gallus (Chicken).